Here is a 211-residue protein sequence, read N- to C-terminus: Inactive ribonuclease-like protein 10 (211 aa).

Positions 1–24 are cleaved as a signal peptide; sequence MKLTLVQIFFMMLLLLLGLGVGLG.

This sequence belongs to the pancreatic ribonuclease family. Post-translationally, the N-terminus is blocked. Glycosylated.

The protein resides in the secreted. Its function is as follows. Secreted proximal epididymal protein required for post-testicular sperm maturation and male fertility. May be involved in sperm adhesion to the egg zona pellucida. Does not have ribonuclease activity. This chain is Inactive ribonuclease-like protein 10 (RNASE10), found in Bos taurus (Bovine).